The following is a 360-amino-acid chain: Sphingolipid delta(4)-desaturase (360 aa).

3 helical membrane-spanning segments follow: residues 67 to 87 (AVVLLQLSIAYALKNTPVLSF), 89 to 109 (FLALAYVVGATANQNCFLCIH), and 125 to 145 (LFAIWVNLPIGVPYSASFQPY). Residues 109–113 (HELSH) carry the Histidine box-1 motif. The short motif at 146–150 (HQLHH) is the Histidine box-2 element. The next 3 membrane-spanning stretches (helical) occupy residues 170–190 (VLSSLLGKAFFATFQIFFYAL), 202–222 (FIHLLNVLVCLVSDFILIKFG), and 228–248 (WYLILSSFFAGSLHPTAGHFI). The Histidine box-3 signature appears at 288-292 (HNEHH).

Belongs to the fatty acid desaturase type 1 family. DEGS subfamily.

Its subcellular location is the membrane. It catalyses the reaction an N-acylsphinganine + 2 Fe(II)-[cytochrome b5] + O2 + 2 H(+) = an N-acylsphing-4-enine + 2 Fe(III)-[cytochrome b5] + 2 H2O. Its pathway is lipid metabolism; sphingolipid metabolism. Its function is as follows. Delta(4)-fatty-acid desaturase which introduces a double bond at the 4-position in the long-chain base (LCB) of ceramides. Required for the formation of the monounsaturated sphingoid base (E)-sphing-4-enine during glucosylceramide (GluCer) biosynthesis. This chain is Sphingolipid delta(4)-desaturase, found in Komagataella phaffii (strain GS115 / ATCC 20864) (Yeast).